The chain runs to 304 residues: Acetyl-coenzyme A carboxylase carboxyl transferase subunit beta (304 aa).

Positions 25–294 (VWTKCDSCGQ…PSVVESKADT (270 aa)) constitute a CoA carboxyltransferase N-terminal domain. Zn(2+) contacts are provided by cysteine 29, cysteine 32, cysteine 48, and cysteine 51. The segment at 29-51 (CDSCGQVLYRAELERNLEVCPKC) adopts a C4-type zinc-finger fold.

Belongs to the AccD/PCCB family. In terms of assembly, acetyl-CoA carboxylase is a heterohexamer composed of biotin carboxyl carrier protein (AccB), biotin carboxylase (AccC) and two subunits each of ACCase subunit alpha (AccA) and ACCase subunit beta (AccD). It depends on Zn(2+) as a cofactor.

The protein localises to the cytoplasm. The enzyme catalyses N(6)-carboxybiotinyl-L-lysyl-[protein] + acetyl-CoA = N(6)-biotinyl-L-lysyl-[protein] + malonyl-CoA. The protein operates within lipid metabolism; malonyl-CoA biosynthesis; malonyl-CoA from acetyl-CoA: step 1/1. Functionally, component of the acetyl coenzyme A carboxylase (ACC) complex. Biotin carboxylase (BC) catalyzes the carboxylation of biotin on its carrier protein (BCCP) and then the CO(2) group is transferred by the transcarboxylase to acetyl-CoA to form malonyl-CoA. This chain is Acetyl-coenzyme A carboxylase carboxyl transferase subunit beta, found in Yersinia pseudotuberculosis serotype O:1b (strain IP 31758).